Consider the following 37-residue polypeptide: Desulforedoxin (37 aa).

Fe cation contacts are provided by Cys-10, Cys-13, Cys-29, and Cys-30.

It to the N-terminal section of desulfoferrodoxin. As to quaternary structure, homodimer. Requires Fe cation as cofactor.

In terms of biological role, nonheme iron protein possibly involved in electron transport. This chain is Desulforedoxin (dsr), found in Megalodesulfovibrio gigas (Desulfovibrio gigas).